The chain runs to 499 residues: 3-octaprenyl-4-hydroxybenzoate carboxy-lyase (499 aa).

Mn(2+) is bound at residue asparagine 173. Residues 176–178, 190–192, and 195–196 each bind prenylated FMN; these read IYR, RWL, and RG. Glutamate 239 is a binding site for Mn(2+). Aspartate 288 (proton donor) is an active-site residue.

This sequence belongs to the UbiD family. As to quaternary structure, homohexamer. Requires prenylated FMN as cofactor. Mn(2+) is required as a cofactor.

It is found in the cell membrane. The enzyme catalyses a 4-hydroxy-3-(all-trans-polyprenyl)benzoate + H(+) = a 2-(all-trans-polyprenyl)phenol + CO2. The protein operates within cofactor biosynthesis; ubiquinone biosynthesis. Functionally, catalyzes the decarboxylation of 3-octaprenyl-4-hydroxy benzoate to 2-octaprenylphenol, an intermediate step in ubiquinone biosynthesis. This is 3-octaprenyl-4-hydroxybenzoate carboxy-lyase from Blochmanniella floridana.